A 194-amino-acid chain; its full sequence is Putative manganese efflux pump MntP (194 aa).

Helical transmembrane passes span 6 to 26 (LILV…GLAL), 35 to 55 (WLFA…GLYL), 66 to 86 (VAAI…LWEA), 109 to 129 (GVLG…LDAL), 142 to 162 (VPLT…LGLL), and 174 to 194 (RAEL…LVGV).

This sequence belongs to the MntP (TC 9.B.29) family.

It localises to the cell membrane. Its function is as follows. Probably functions as a manganese efflux pump. The polypeptide is Putative manganese efflux pump MntP (Moorella thermoacetica (strain ATCC 39073 / JCM 9320)).